The primary structure comprises 149 residues: Large ribosomal subunit protein uL13 (149 aa).

Belongs to the universal ribosomal protein uL13 family. Part of the 50S ribosomal subunit.

Its function is as follows. This protein is one of the early assembly proteins of the 50S ribosomal subunit, although it is not seen to bind rRNA by itself. It is important during the early stages of 50S assembly. The chain is Large ribosomal subunit protein uL13 from Bifidobacterium longum subsp. infantis (strain ATCC 15697 / DSM 20088 / JCM 1222 / NCTC 11817 / S12).